Reading from the N-terminus, the 141-residue chain is HTH-type transcriptional regulator LrpA (141 aa).

In terms of domain architecture, HTH asnC-type spans 2–63 (IDERDKIILE…RINPKKLGYS (62 aa)). Positions 21–40 (FTEIAKKLGISETAVRKRVK) form a DNA-binding region, H-T-H motif.

In terms of assembly, homooctamer; tetramer of dimers.

In terms of biological role, DNA-binding protein that negatively regulates its own transcription. Interferes with RNA polymerase (RNAP) recruitment by inhibiting the association of RNAP with the TBP-TFB promoter complex. In Pyrococcus horikoshii (strain ATCC 700860 / DSM 12428 / JCM 9974 / NBRC 100139 / OT-3), this protein is HTH-type transcriptional regulator LrpA (lrpA).